A 472-amino-acid polypeptide reads, in one-letter code: 3-isopropylmalate dehydratase large subunit (472 aa).

Residues cysteine 347, cysteine 407, and cysteine 410 each contribute to the [4Fe-4S] cluster site.

Belongs to the aconitase/IPM isomerase family. LeuC type 1 subfamily. Heterodimer of LeuC and LeuD. It depends on [4Fe-4S] cluster as a cofactor.

It carries out the reaction (2R,3S)-3-isopropylmalate = (2S)-2-isopropylmalate. It participates in amino-acid biosynthesis; L-leucine biosynthesis; L-leucine from 3-methyl-2-oxobutanoate: step 2/4. Its function is as follows. Catalyzes the isomerization between 2-isopropylmalate and 3-isopropylmalate, via the formation of 2-isopropylmaleate. The sequence is that of 3-isopropylmalate dehydratase large subunit from Bacillus velezensis (strain DSM 23117 / BGSC 10A6 / LMG 26770 / FZB42) (Bacillus amyloliquefaciens subsp. plantarum).